A 393-amino-acid chain; its full sequence is Serine/threonine-protein kinase US3 homolog (393 aa).

The region spanning 93–378 (FVILKTFTPG…AEVLLNHSVF (286 aa)) is the Protein kinase domain. ATP is bound by residues 99–107 (FTPGAEGFA) and Lys-122. The Proton acceptor role is filled by Asp-206.

This sequence belongs to the protein kinase superfamily. Ser/Thr protein kinase family. Post-translationally, phosphorylated by ORF47; this phosphorylation regulates subsequent phosphorylation of proteins 24 and 27 by ORF66. Autophosphorylated.

The protein resides in the host cytoplasm. The protein localises to the host nucleus. It catalyses the reaction L-seryl-[protein] + ATP = O-phospho-L-seryl-[protein] + ADP + H(+). The enzyme catalyses L-threonyl-[protein] + ATP = O-phospho-L-threonyl-[protein] + ADP + H(+). Multifunctional serine/threonine kinase that plays a role in several processes including egress of virus particles from the nucleus, modulation of the actin cytoskeleton and inhibition of apoptosis. Phosphorylates proteins 24 and 27, two critical regulators of capsid budding from nucleus to endoplasmic reticulum, thereby facilitating virion egress. Modulates and redistributes host components of the nuclear envelope, including LMNA, emerin/EMD and the nuclear matrix protein MATR3. Phosphorylates envelope glycoprotein B (gB), probably to direct it to the cell surface. Promotes virus intracellular spread by restructuring host cell cytoskeleton. Blocks host apoptosis to extend cell survival and allow efficient viral replication. Promotes viral gene expression by phosphorylating host HDAC2 to reduce viral genome silencing. Down-regulates class I major histocompatibility complex (MHC-I) surface expression. Additionally, phosphorylates IE62 and targets it to the cytoplasm. The nuclear exclusion of IE62 enables the packaging of abundant levels of IE62 into virions. In Varicella-zoster virus (strain Dumas) (HHV-3), this protein is Serine/threonine-protein kinase US3 homolog (66).